Reading from the N-terminus, the 360-residue chain is Probable cinnamyl alcohol dehydrogenase 6 (360 aa).

Cys48 contacts Zn(2+). Thr50 is a binding site for NADP(+). The Zn(2+) site is built by His70, Glu71, Cys101, Cys104, Cys107, Cys115, and Cys164. Residues Thr168, 192–197 (GLGGLG), 215–220 (STSPAK), Thr255, Gly279, and 302–304 (SMT) each bind NADP(+).

It belongs to the zinc-containing alcohol dehydrogenase family. Homodimer. It depends on Zn(2+) as a cofactor.

It carries out the reaction (E)-cinnamyl alcohol + NADP(+) = (E)-cinnamaldehyde + NADPH + H(+). The catalysed reaction is (E)-coniferol + NADP(+) = (E)-coniferaldehyde + NADPH + H(+). It catalyses the reaction (E)-sinapyl alcohol + NADP(+) = (E)-sinapaldehyde + NADPH + H(+). The enzyme catalyses (E)-4-coumaroyl alcohol + NADP(+) = (E)-4-coumaraldehyde + NADPH + H(+). It carries out the reaction (E)-caffeyl alcohol + NADP(+) = (E)-caffeyl aldehyde + NADPH + H(+). It functions in the pathway aromatic compound metabolism; phenylpropanoid biosynthesis. In terms of biological role, involved in lignin biosynthesis. Catalyzes the final step specific for the production of lignin monomers. Catalyzes the NADPH-dependent reduction of coniferaldehyde, 5-hydroxyconiferaldehyde, sinapaldehyde, 4-coumaraldehyde and caffeyl aldehyde to their respective alcohols. This chain is Probable cinnamyl alcohol dehydrogenase 6, found in Oryza sativa subsp. japonica (Rice).